Consider the following 453-residue polypeptide: Adenosylmethionine-8-amino-7-oxononanoate aminotransferase (453 aa).

Gly118–Ser119 is a pyridoxal 5'-phosphate binding site. Residue Tyr151 coordinates substrate. Asp258 contributes to the pyridoxal 5'-phosphate binding site. Residues Lys287, Gly322, and Arg417 each contribute to the substrate site. Lys287 carries the N6-(pyridoxal phosphate)lysine modification.

Belongs to the class-III pyridoxal-phosphate-dependent aminotransferase family. BioA subfamily. Homodimer. Pyridoxal 5'-phosphate serves as cofactor.

It is found in the cytoplasm. It catalyses the reaction (8S)-8-amino-7-oxononanoate + S-adenosyl-L-methionine = S-adenosyl-4-methylsulfanyl-2-oxobutanoate + (7R,8S)-7,8-diammoniononanoate. It functions in the pathway cofactor biosynthesis; biotin biosynthesis; 7,8-diaminononanoate from 8-amino-7-oxononanoate (SAM route): step 1/1. Catalyzes the transfer of the alpha-amino group from S-adenosyl-L-methionine (SAM) to 7-keto-8-aminopelargonic acid (KAPA) to form 7,8-diaminopelargonic acid (DAPA). It is the only aminotransferase known to utilize SAM as an amino donor. This is Adenosylmethionine-8-amino-7-oxononanoate aminotransferase from Geobacter sulfurreducens (strain ATCC 51573 / DSM 12127 / PCA).